A 255-amino-acid polypeptide reads, in one-letter code: Protein DOG1-like 2 (255 aa).

One can recognise a DOG1 domain in the interval 10–246; the sequence is EKLQKRCYHE…HDRGRVRADV (237 aa).

This Arabidopsis thaliana (Mouse-ear cress) protein is Protein DOG1-like 2.